The primary structure comprises 466 residues: Methylenetetrahydrofolate--tRNA-(uracil-5-)-methyltransferase TrmFO (466 aa).

10-15 (GGGLAG) is an FAD binding site.

The protein belongs to the MnmG family. TrmFO subfamily. FAD serves as cofactor.

The protein localises to the cytoplasm. It carries out the reaction uridine(54) in tRNA + (6R)-5,10-methylene-5,6,7,8-tetrahydrofolate + NADH + H(+) = 5-methyluridine(54) in tRNA + (6S)-5,6,7,8-tetrahydrofolate + NAD(+). The catalysed reaction is uridine(54) in tRNA + (6R)-5,10-methylene-5,6,7,8-tetrahydrofolate + NADPH + H(+) = 5-methyluridine(54) in tRNA + (6S)-5,6,7,8-tetrahydrofolate + NADP(+). In terms of biological role, catalyzes the folate-dependent formation of 5-methyl-uridine at position 54 (M-5-U54) in all tRNAs. The sequence is that of Methylenetetrahydrofolate--tRNA-(uracil-5-)-methyltransferase TrmFO from Phenylobacterium zucineum (strain HLK1).